Consider the following 96-residue polypeptide: Co-chaperonin GroES (96 aa).

It belongs to the GroES chaperonin family. Heptamer of 7 subunits arranged in a ring. Interacts with the chaperonin GroEL.

It is found in the cytoplasm. Its function is as follows. Together with the chaperonin GroEL, plays an essential role in assisting protein folding. The GroEL-GroES system forms a nano-cage that allows encapsulation of the non-native substrate proteins and provides a physical environment optimized to promote and accelerate protein folding. GroES binds to the apical surface of the GroEL ring, thereby capping the opening of the GroEL channel. The polypeptide is Co-chaperonin GroES (Shewanella sediminis (strain HAW-EB3)).